The following is a 154-amino-acid chain: Endoribonuclease YbeY (154 aa).

Histidine 114, histidine 118, and histidine 124 together coordinate Zn(2+).

This sequence belongs to the endoribonuclease YbeY family. The cofactor is Zn(2+).

It is found in the cytoplasm. Functionally, single strand-specific metallo-endoribonuclease involved in late-stage 70S ribosome quality control and in maturation of the 3' terminus of the 16S rRNA. The protein is Endoribonuclease YbeY of Haemophilus influenzae (strain ATCC 51907 / DSM 11121 / KW20 / Rd).